Reading from the N-terminus, the 547-residue chain is DNA ligase (547 aa).

Position 244 (glutamate 244) interacts with ATP. Lysine 246 serves as the catalytic N6-AMP-lysine intermediate. The ATP site is built by arginine 251, arginine 266, glutamate 295, phenylalanine 334, arginine 405, and lysine 411.

The protein belongs to the ATP-dependent DNA ligase family. The cofactor is Mg(2+).

The enzyme catalyses ATP + (deoxyribonucleotide)n-3'-hydroxyl + 5'-phospho-(deoxyribonucleotide)m = (deoxyribonucleotide)n+m + AMP + diphosphate.. In terms of biological role, DNA ligase that seals nicks in double-stranded DNA during DNA replication, DNA recombination and DNA repair. The sequence is that of DNA ligase from Methanospirillum hungatei JF-1 (strain ATCC 27890 / DSM 864 / NBRC 100397 / JF-1).